The sequence spans 792 residues: Phenylalanine--tRNA ligase beta subunit (792 aa).

The region spanning 39 to 147 is the tRNA-binding domain; the sequence is GESLGQVVVA…DDAPVGQALA (109 aa). The region spanning 400-475 is the B5 domain; that stretch reads PQPARILLRR…RIHGYDRVPT (76 aa). Asp-453, Asp-459, Glu-462, and Asp-463 together coordinate Mg(2+). In terms of domain architecture, FDX-ACB spans 698–791; sequence SRFPSVRRDL…IEREHRARIR (94 aa).

This sequence belongs to the phenylalanyl-tRNA synthetase beta subunit family. Type 1 subfamily. Tetramer of two alpha and two beta subunits. Mg(2+) serves as cofactor.

The protein resides in the cytoplasm. The enzyme catalyses tRNA(Phe) + L-phenylalanine + ATP = L-phenylalanyl-tRNA(Phe) + AMP + diphosphate + H(+). This is Phenylalanine--tRNA ligase beta subunit from Xanthomonas oryzae pv. oryzae (strain MAFF 311018).